We begin with the raw amino-acid sequence, 241 residues long: MLSESLTKTKLTDPLILDLLQNIREHRSMLEDLVSIKIDPNLTNIISNEIGRELYIENEFHKAKGFRKLHIEVAEFSKNLRILHCVFFPDPKFDIPIFGMDLVKINDIVSAAIVDLSPASQNQGLKYEKLLSQVDKSSFSSLREIPKWGGIFSNNVFFASLKRNSEKNDFCRVVDQYLSILIKLSNKAKAEVDKEIIQERIDFQKNYCVQQMKNEKTSMVLLKYFDEKWVNNYIKTVLFDF.

Belongs to the HY2 family.

It catalyses the reaction (2R,3Z)-phycocyanobilin + 4 oxidized [2Fe-2S]-[ferredoxin] = biliverdin IXalpha + 4 reduced [2Fe-2S]-[ferredoxin] + 4 H(+). In terms of biological role, catalyzes the four-electron reduction of biliverdin IX-alpha (2-electron reduction at both the A and D rings); the reaction proceeds via an isolatable 2-electron intermediate, 181,182-dihydrobiliverdin. The chain is Phycocyanobilin:ferredoxin oxidoreductase from Prochlorococcus marinus (strain MIT 9215).